The chain runs to 520 residues: Probable DNA ligase (520 aa).

E213 contributes to the ATP binding site. K215 functions as the N6-AMP-lysine intermediate in the catalytic mechanism. R220, R235, E264, F300, R372, and K378 together coordinate ATP.

The protein belongs to the ATP-dependent DNA ligase family. It depends on Mg(2+) as a cofactor.

The enzyme catalyses ATP + (deoxyribonucleotide)n-3'-hydroxyl + 5'-phospho-(deoxyribonucleotide)m = (deoxyribonucleotide)n+m + AMP + diphosphate.. DNA ligase that seals nicks in double-stranded DNA during DNA replication, DNA recombination and DNA repair. The protein is Probable DNA ligase of Mycobacterium sp. (strain JLS).